Here is a 596-residue protein sequence, read N- to C-terminus: Elongation factor 4 (596 aa).

One can recognise a tr-type G domain in the interval 2–183; that stretch reads ENIRNFCIIA…AIIQRIPPPK (182 aa). GTP is bound by residues 14-19 and 130-133; these read DHGKST and NKID.

The protein belongs to the TRAFAC class translation factor GTPase superfamily. Classic translation factor GTPase family. LepA subfamily.

It is found in the cell inner membrane. The enzyme catalyses GTP + H2O = GDP + phosphate + H(+). Its function is as follows. Required for accurate and efficient protein synthesis under certain stress conditions. May act as a fidelity factor of the translation reaction, by catalyzing a one-codon backward translocation of tRNAs on improperly translocated ribosomes. Back-translocation proceeds from a post-translocation (POST) complex to a pre-translocation (PRE) complex, thus giving elongation factor G a second chance to translocate the tRNAs correctly. Binds to ribosomes in a GTP-dependent manner. The sequence is that of Elongation factor 4 from Cytophaga hutchinsonii (strain ATCC 33406 / DSM 1761 / CIP 103989 / NBRC 15051 / NCIMB 9469 / D465).